We begin with the raw amino-acid sequence, 39 residues long: Natriuretic peptide CnNP-b (39 aa).

A propeptide spanning residues 1–8 (SGSKTATK) is cleaved from the precursor. Cys-12 and Cys-28 form a disulfide bridge. A disordered region spans residues 20–39 (IGSTSGMGCGGVPKPTPGGS).

This sequence belongs to the natriuretic peptide family. In terms of tissue distribution, expressed by the venom gland.

Its subcellular location is the secreted. In terms of biological role, snake venom natriuretic peptide that targets both NPR1 and NPR2. Exhibits hypotensive and vasodepressor activities. In Cryptophis nigrescens (Eastern small-eyed snake), this protein is Natriuretic peptide CnNP-b.